The chain runs to 253 residues: MSVSSRPGRRRFALIPSAGTGTRAGGDLPKQYQPLAGRPMLWHTVQAFLASAAIDRVVVVTSPGAPALAARFPGLGFDAARLVEVDCGGDSRHASVTNGLAALRGLGAHEDDWVLVHDAARPGLTPALIARLVGAVEADGGQAVGGILALPVADTLKRADAGQHIAETVPRGGLWQAQTPQMFPLGLLQRALSEALTAQRIVTDEASAIEAAGHRPLLVAGALRNFKVTYPDDFALAEAILAGAAPTQEDSQA.

Residues 1–28 (MSVSSRPGRRRFALIPSAGTGTRAGGDL) are disordered.

It belongs to the IspD/TarI cytidylyltransferase family. IspD subfamily.

The catalysed reaction is 2-C-methyl-D-erythritol 4-phosphate + CTP + H(+) = 4-CDP-2-C-methyl-D-erythritol + diphosphate. The protein operates within isoprenoid biosynthesis; isopentenyl diphosphate biosynthesis via DXP pathway; isopentenyl diphosphate from 1-deoxy-D-xylulose 5-phosphate: step 2/6. Catalyzes the formation of 4-diphosphocytidyl-2-C-methyl-D-erythritol from CTP and 2-C-methyl-D-erythritol 4-phosphate (MEP). The polypeptide is 2-C-methyl-D-erythritol 4-phosphate cytidylyltransferase (Ralstonia nicotianae (strain ATCC BAA-1114 / GMI1000) (Ralstonia solanacearum)).